The following is a 271-amino-acid chain: Solute carrier family 66 member 2 (271 aa).

Transmembrane regions (helical) follow at residues 7-27 (GWLL…AMVF), 49-69 (FSTH…LFWF), and 72-92 (HFES…LLML). Positions 14-80 (HQLVSWVAAG…RHFESPLLWQ (67 aa)) constitute a PQ-loop 1 domain. Ser110 is subject to Phosphoserine. The next 3 helical transmembrane spans lie at 143-163 (FADY…ITYL), 168-188 (ALFV…LGVP), and 232-252 (VCGL…YAFA). Residues 149-215 (CVLAFTGVAG…MVLMWTSGDT (67 aa)) form the PQ-loop 2 domain.

It is found in the membrane. This chain is Solute carrier family 66 member 2 (Slc66a2), found in Rattus norvegicus (Rat).